The primary structure comprises 94 residues: Large ribosomal subunit protein bL25 (94 aa).

The protein belongs to the bacterial ribosomal protein bL25 family. As to quaternary structure, part of the 50S ribosomal subunit; part of the 5S rRNA/L5/L18/L25 subcomplex. Contacts the 5S rRNA. Binds to the 5S rRNA independently of L5 and L18.

This is one of the proteins that binds to the 5S RNA in the ribosome where it forms part of the central protuberance. The sequence is that of Large ribosomal subunit protein bL25 from Yersinia pestis bv. Antiqua (strain Antiqua).